The primary structure comprises 223 residues: Alpha-S2-casein (223 aa).

A signal peptide spans 1–15; the sequence is MKLFIFTCLLAVALA. A phosphoserine mark is found at S23, S24, S25, S28, S46, S71, S72, and S73. Repeats lie at residues 76-128 and 129-223; these read FADI…TLGK and EQIS…ERQA. A phosphoserine mark is found at S132, S147, and S155.

Belongs to the alpha-casein family. As to expression, mammary gland specific. Secreted in milk.

The protein resides in the secreted. Its function is as follows. Important role in the capacity of milk to transport calcium phosphate. This is Alpha-S2-casein (CSN1S2) from Cavia porcellus (Guinea pig).